The primary structure comprises 131 residues: Methylglyoxal synthase (131 aa).

One can recognise an MGS-like domain in the interval M1–K131. Substrate is bound by residues H8, K12, T34 to T37, and S54 to G55. Residue D60 is the Proton donor/acceptor of the active site. A substrate-binding site is contributed by H87.

The protein belongs to the methylglyoxal synthase family.

It carries out the reaction dihydroxyacetone phosphate = methylglyoxal + phosphate. Catalyzes the formation of methylglyoxal from dihydroxyacetone phosphate. The polypeptide is Methylglyoxal synthase (Bacillus cereus (strain AH820)).